The following is a 242-amino-acid chain: MNAWLTPDWPAPARVRACVTTRSGGVSQAPFDSLNLGAHVDDDPRAVEENRRRLTERLECRPSWLDQVHGVTVVEADPSRVLRADASWSAMPGVACTIMTADCLPALFCDRSGTRVAAAHAGWRGLAAGVLEATVDSLGVPGDELLVWLGPAIGPRAFEVGGEVRDAFVAAHAEARSAFVPSANPGRFMADIYRLARIRLGAHGVTAVHGGGFCTFSDTARFYSYRRSSRTGRFASLVWLQD.

The Zn(2+) site is built by His-69, Cys-103, and His-120.

The protein belongs to the purine nucleoside phosphorylase YfiH/LACC1 family. In terms of assembly, homodimer. Cu(2+) is required as a cofactor. The cofactor is Zn(2+).

It carries out the reaction adenosine + phosphate = alpha-D-ribose 1-phosphate + adenine. The catalysed reaction is S-methyl-5'-thioadenosine + phosphate = 5-(methylsulfanyl)-alpha-D-ribose 1-phosphate + adenine. It catalyses the reaction inosine + phosphate = alpha-D-ribose 1-phosphate + hypoxanthine. The enzyme catalyses adenosine + H2O + H(+) = inosine + NH4(+). Purine nucleoside enzyme that catalyzes the phosphorolysis of adenosine and inosine nucleosides, yielding D-ribose 1-phosphate and the respective free bases, adenine and hypoxanthine. Also catalyzes the phosphorolysis of S-methyl-5'-thioadenosine into adenine and S-methyl-5-thio-alpha-D-ribose 1-phosphate. Also has adenosine deaminase activity. The protein is Purine nucleoside phosphorylase PA4543 of Pseudomonas aeruginosa (strain ATCC 15692 / DSM 22644 / CIP 104116 / JCM 14847 / LMG 12228 / 1C / PRS 101 / PAO1).